Consider the following 358-residue polypeptide: Alternative oxidase, mitochondrial (358 aa).

The helical transmembrane segment at 152–172 (LIRMVFLESVAGVPGMVAGML) threads the bilayer. Glu-159, Glu-198, and His-201 together coordinate Fe cation. The chain crosses the membrane as a helical span at residues 217 to 237 (FMIIGAQGVFFNSMFLSYLIS). Fe cation contacts are provided by Glu-249, Glu-250, Glu-306, and His-309.

Belongs to the alternative oxidase family. Fe cation serves as cofactor.

It is found in the mitochondrion inner membrane. In terms of biological role, catalyzes cyanide-resistant oxygen consumption. May increase respiration when the cytochrome respiratory pathway is restricted, or in response to low temperatures. The protein is Alternative oxidase, mitochondrial of Blumeria graminis (Powdery mildew).